Consider the following 568-residue polypeptide: MDNIISRGEIEDRIARGQAIVIYEGLVLNLEKWIKFHPGGDKAIHHMIGRDATDEMKAYHCDETVEIFRKWRIGRIDQEWENFLPPIQGGVFRFLNQQHDSTDLGLSNKWIAPNTSDQFKFIKNEKHMCGEPDVKIYPKIPQGVIPSLNLKEAYEKKVVTDPATVADNYDNELVRQDLETLPDLDPKTQEWLSKEYNKMHNEIIEAGLYQCNYFRYVKELTRIGLLFALSYYLLYHRDQKFWSAFSMGCAWQQLVFIAHDAGHISITHHYQLDNIFGMIIASWVGGLSLGWWKRNHNVHHLITNDPIHDPDIQHLPFFAVSTRLFDNIYSTYYEKFLWFDAFAKKVVPWQNYLYYPMLAFGRFNLYRLSWMHVLLGLGPRRGKAGWFRYFELCGLIFFNYWFFYLLVGCKLQTGWDRFQYIMVSHITTMLVHVQITLSHFAMSTSDLGVGEGFPMRQLRTSMDVDCPRWLDFLHGGLQFQVVHHLFPRLPRHNLRAAQPYVIEFCEKVGIKYSIYGFSKGNGVVLTKLQEIAVQAKTMLECASAMKKEATGEREADEKTYRTKSIKNA.

The Cytochrome b5 heme-binding domain occupies 2 to 77; it reads DNIISRGEIE…FRKWRIGRID (76 aa). Residues histidine 37 and histidine 60 each contribute to the heme site. 2 helical membrane-spanning segments follow: residues 241-261 and 272-292; these read FWSA…AHDA and LDNI…LGWW. The Histidine box-1 motif lies at 259-263; that stretch reads HDAGH. A Histidine box-2 motif is present at residues 296–300; it reads HNVHH. Transmembrane regions (helical) follow at residues 352 to 377, 389 to 409, and 421 to 441; these read YLYY…LLGL, YFEL…LVGC, and IMVS…SHFA. The Histidine box-3 motif lies at 480-484; the sequence is QVVHH. The segment covering 549–560 has biased composition (basic and acidic residues); it reads ATGEREADEKTY. The tract at residues 549 to 568 is disordered; the sequence is ATGEREADEKTYRTKSIKNA.

The protein belongs to the fatty acid desaturase type 1 family.

The protein localises to the membrane. It carries out the reaction an N-acylsphing-4-enine + 2 Fe(II)-[cytochrome b5] + O2 + 2 H(+) = a (4E,8E)-4-sphinga-4,8-dienine ceramide + 2 Fe(III)-[cytochrome b5] + 2 H2O. The protein operates within lipid metabolism; sphingolipid metabolism. In terms of biological role, delta(8)-fatty-acid desaturase which introduces a double bond at the 8-position in the long-chain base (LCB) of ceramides. Required for the formation of the di-unsaturated sphingoid base (E,E)-sphinga-4,8-dienine during glucosylceramide (GluCer) biosynthesis. This is Delta 8-(E)-sphingolipid desaturase from Lachancea kluyveri (strain ATCC 58438 / CBS 3082 / BCRC 21498 / NBRC 1685 / JCM 7257 / NCYC 543 / NRRL Y-12651) (Yeast).